A 509-amino-acid polypeptide reads, in one-letter code: Photosystem II CP47 reaction center protein (509 aa).

6 helical membrane-spanning segments follow: residues 21-36, 101-115, 140-156, 203-218, 237-252, and 457-472; these read SVHI…WAGS, IVFS…IWHW, GIHL…FGAF, IAAG…FHLS, VLSS…AFVV, and SFAL…HGAR.

This sequence belongs to the PsbB/PsbC family. PsbB subfamily. PSII is composed of 1 copy each of membrane proteins PsbA, PsbB, PsbC, PsbD, PsbE, PsbF, PsbH, PsbI, PsbJ, PsbK, PsbL, PsbM, PsbT, PsbX, PsbY, PsbZ, Psb30/Ycf12, at least 3 peripheral proteins of the oxygen-evolving complex and a large number of cofactors. It forms dimeric complexes. Binds multiple chlorophylls. PSII binds additional chlorophylls, carotenoids and specific lipids. is required as a cofactor.

It is found in the plastid. The protein resides in the chloroplast thylakoid membrane. Functionally, one of the components of the core complex of photosystem II (PSII). It binds chlorophyll and helps catalyze the primary light-induced photochemical processes of PSII. PSII is a light-driven water:plastoquinone oxidoreductase, using light energy to abstract electrons from H(2)O, generating O(2) and a proton gradient subsequently used for ATP formation. The chain is Photosystem II CP47 reaction center protein from Cicer arietinum (Chickpea).